The primary structure comprises 344 residues: Phosphoribosylformylglycinamidine cyclo-ligase (344 aa).

This sequence belongs to the AIR synthase family.

The protein localises to the cytoplasm. The catalysed reaction is 2-formamido-N(1)-(5-O-phospho-beta-D-ribosyl)acetamidine + ATP = 5-amino-1-(5-phospho-beta-D-ribosyl)imidazole + ADP + phosphate + H(+). It functions in the pathway purine metabolism; IMP biosynthesis via de novo pathway; 5-amino-1-(5-phospho-D-ribosyl)imidazole from N(2)-formyl-N(1)-(5-phospho-D-ribosyl)glycinamide: step 2/2. The protein is Phosphoribosylformylglycinamidine cyclo-ligase of Synechococcus sp. (strain RCC307).